The sequence spans 232 residues: Probable GTP-binding protein EngB (232 aa).

The region spanning 13–188 is the EngB-type G domain; it reads IGLEVAFAGR…AGVMGNWYEY (176 aa). Residues 21–28, 48–52, 67–70, 134–137, and 167–169 contribute to the GTP site; these read GRSNAGKS, GRTQM, DLPG, TKAD, and FSA. Mg(2+)-binding residues include S28 and T50.

The protein belongs to the TRAFAC class TrmE-Era-EngA-EngB-Septin-like GTPase superfamily. EngB GTPase family. It depends on Mg(2+) as a cofactor.

Functionally, necessary for normal cell division and for the maintenance of normal septation. The protein is Probable GTP-binding protein EngB of Psychrobacter arcticus (strain DSM 17307 / VKM B-2377 / 273-4).